We begin with the raw amino-acid sequence, 523 residues long: Rho guanine nucleotide exchange factor 8 (523 aa).

Positions Val-44–Phe-57 are enriched in polar residues. 2 disordered regions span residues Val-44–Gln-83 and Glu-442–His-523. The region spanning Gly-76–Ala-440 is the PRONE domain. A compositionally biased stretch (basic and acidic residues) spans Glu-465–Thr-475.

In terms of assembly, homodimer. The homodimer interacts with ARAC5/ROP4. Interacts with ARAC11/ROP1 and ARAC10/ROP11. Interacts with PRK6. Expressed in pollen grains and pollen tubes.

Its subcellular location is the cell membrane. Functionally, guanine-nucleotide exchange factor (GEF) that acts as an activator of Rop (Rho of plants) GTPases by promoting the exchange of GDP for GTP. Active as homodimer. This is Rho guanine nucleotide exchange factor 8 from Arabidopsis thaliana (Mouse-ear cress).